A 221-amino-acid polypeptide reads, in one-letter code: Kynurenine formamidase (221 aa).

Phenylalanine 30 provides a ligand contact to substrate. Histidine 60, histidine 64, and aspartate 66 together coordinate Zn(2+). Histidine 70 acts as the Proton donor/acceptor in catalysis. Positions 172 and 184 each coordinate Zn(2+).

Belongs to the Cyclase 1 superfamily. KynB family. As to quaternary structure, homodimer. It depends on Zn(2+) as a cofactor.

It carries out the reaction N-formyl-L-kynurenine + H2O = L-kynurenine + formate + H(+). Its pathway is amino-acid degradation; L-tryptophan degradation via kynurenine pathway; L-kynurenine from L-tryptophan: step 2/2. In terms of biological role, catalyzes the hydrolysis of N-formyl-L-kynurenine to L-kynurenine, the second step in the kynurenine pathway of tryptophan degradation. This chain is Kynurenine formamidase, found in Polaromonas sp. (strain JS666 / ATCC BAA-500).